The chain runs to 118 residues: Putative cytochrome P450 family member 4F30 (118 aa).

The disordered stretch occupies residues 1-64 (MVTPAGCLGG…GPLHILGTDG (64 aa)). Residues 28–43 (RAGQTGQAVSGAQVSS) show a composition bias toward polar residues.

In Homo sapiens (Human), this protein is Putative cytochrome P450 family member 4F30 (CYP4F30P).